A 192-amino-acid chain; its full sequence is Zinc finger CCHC domain-containing protein 10 (192 aa).

A CCHC-type zinc finger spans residues 43-60 (VRCQKCLEFGHWTYECTG). A disordered region spans residues 89–192 (QSIGETNVER…DEPPKKKKKK (104 aa)). 2 stretches are compositionally biased toward low complexity: residues 109–136 (TSSS…SSSS) and 144–179 (SSSS…STDS).

This chain is Zinc finger CCHC domain-containing protein 10 (ZCCHC10), found in Homo sapiens (Human).